The primary structure comprises 88 residues: MEEITCAFLLLLAGLPALEASDPVDKDSPFYYDWESLQLGGLIFGGLLCIAGIAMALSGKCKCRRTHKPSSLPGKATPLIIPGSANTC.

Residues 1 to 20 form the signal peptide; that stretch reads MEEITCAFLLLLAGLPALEA. The Extracellular portion of the chain corresponds to 21–38; that stretch reads SDPVDKDSPFYYDWESLQ. Residues 39–59 form a helical membrane-spanning segment; it reads LGGLIFGGLLCIAGIAMALSG. Residues 60 to 88 lie on the Cytoplasmic side of the membrane; the sequence is KCKCRRTHKPSSLPGKATPLIIPGSANTC.

This sequence belongs to the FXYD family. Regulatory subunit of the sodium/potassium-transporting ATPase which is composed of a catalytic alpha subunit, a non-catalytic beta subunit and a regulatory subunit. The regulatory subunit, a member of the FXYD protein family, modulates the enzymatic activity in a tissue- and isoform-specific way by changing affinities of the Na+/K+-ATPase toward Na(+), K(+) or ATP.

The protein localises to the cell membrane. It is found in the basolateral cell membrane. Its function is as follows. Associates with and regulates the activity of the sodium/potassium-transporting ATPase (NKA) which catalyzes the hydrolysis of ATP coupled with the exchange of Na(+) and K(+) ions across the plasma membrane. Increases the apparent affinity of the transporter for Na(+) and increases NKA activity. The sequence is that of FXYD domain-containing ion transport regulator 4 (Fxyd4) from Mus musculus (Mouse).